We begin with the raw amino-acid sequence, 486 residues long: Probable transporter MCH1 (486 aa).

12 helical membrane-spanning segments follow: residues 31–51 (IFAL…FSMY), 68–88 (SVSI…GYLG), 95–115 (YLAL…SGIF), 135–155 (EMAL…YASL), 174–194 (TYTP…SSLW), 211–231 (VAGI…IIFF), 268–288 (FFTD…GGPF), 312–333 (FSTH…VGFS), 349–369 (VIAL…FTVF), 377–397 (VVTI…PTIV), 409–429 (IWGS…LLFA), and 457–477 (FVIT…IWVF).

Belongs to the major facilitator superfamily.

The protein resides in the vacuole membrane. In terms of biological role, probable transporter. In Yarrowia lipolytica (strain CLIB 122 / E 150) (Yeast), this protein is Probable transporter MCH1 (MCH1).